The sequence spans 209 residues: Uracil phosphoribosyltransferase (209 aa).

5-phospho-alpha-D-ribose 1-diphosphate-binding positions include Arg-79, Arg-104, and 131-139 (DPMLATGGS). Uracil-binding positions include Val-194 and 199 to 201 (GDA). Asp-200 provides a ligand contact to 5-phospho-alpha-D-ribose 1-diphosphate.

Belongs to the UPRTase family. Requires Mg(2+) as cofactor.

The catalysed reaction is UMP + diphosphate = 5-phospho-alpha-D-ribose 1-diphosphate + uracil. The protein operates within pyrimidine metabolism; UMP biosynthesis via salvage pathway; UMP from uracil: step 1/1. Allosterically activated by GTP. Functionally, catalyzes the conversion of uracil and 5-phospho-alpha-D-ribose 1-diphosphate (PRPP) to UMP and diphosphate. This Bacillus cereus (strain Q1) protein is Uracil phosphoribosyltransferase.